A 356-amino-acid chain; its full sequence is sn-glycerol-3-phosphate import ATP-binding protein UgpC (356 aa).

Residues 4-235 (LKLQAVTKSW…PASRFVASFI (232 aa)) form the ABC transporter domain. Position 37 to 44 (37 to 44 (GPSGCGKS)) interacts with ATP.

This sequence belongs to the ABC transporter superfamily. sn-glycerol-3-phosphate importer (TC 3.A.1.1.3) family. The complex is composed of two ATP-binding proteins (UgpC), two transmembrane proteins (UgpA and UgpE) and a solute-binding protein (UgpB).

It is found in the cell inner membrane. It carries out the reaction sn-glycerol 3-phosphate(out) + ATP + H2O = sn-glycerol 3-phosphate(in) + ADP + phosphate + H(+). Part of the ABC transporter complex UgpBAEC involved in sn-glycerol-3-phosphate (G3P) import. Responsible for energy coupling to the transport system. In Salmonella paratyphi A (strain ATCC 9150 / SARB42), this protein is sn-glycerol-3-phosphate import ATP-binding protein UgpC.